Reading from the N-terminus, the 85-residue chain is Beta-mammal/insect toxin Lqhb1 (85 aa).

Residues M1–T19 form the signal peptide. One can recognise an LCN-type CS-alpha/beta domain in the interval D20–N82. 4 disulfide bridges follow: C31-C81, C35-C56, C42-C63, and C46-C65.

Belongs to the long (4 C-C) scorpion toxin superfamily. Sodium channel inhibitor family. In terms of tissue distribution, expressed by the venom gland.

Its subcellular location is the secreted. In terms of biological role, beta toxins bind voltage-independently at site-4 of sodium channels (Nav) and shift the voltage of activation toward more negative potentials thereby affecting sodium channel activation and promoting spontaneous and repetitive firing. Competes, with apparent high affinity, with anti-insect and anti-mammalian beta-toxins for binding to cockroach and rat brain synaptosomes, respectively. Also competes with an anti-mammalian alpha-toxin on binding to rat brain sodium channels. Has a weak effect on cardiac sodium channels and a marked effect on rat brain and skeletal muscle sodium channels. The polypeptide is Beta-mammal/insect toxin Lqhb1 (Leiurus hebraeus (Hebrew deathstalker scorpion)).